The sequence spans 575 residues: Proline--tRNA ligase, cytoplasmic (575 aa).

Belongs to the class-II aminoacyl-tRNA synthetase family.

The protein resides in the cytoplasm. The enzyme catalyses tRNA(Pro) + L-proline + ATP = L-prolyl-tRNA(Pro) + AMP + diphosphate. This is Proline--tRNA ligase, cytoplasmic (PRS) from Candida albicans (Yeast).